A 357-amino-acid polypeptide reads, in one-letter code: uncharacterized protein (357 aa).

The region spanning 27–242 (HFGNTVTFER…VSSVRLNFPK (216 aa)) is the Radical SAM core domain. [4Fe-4S] cluster-binding residues include cysteine 44, cysteine 50, and cysteine 53.

The cofactor is [4Fe-4S] cluster.

This is an uncharacterized protein from Methanocaldococcus jannaschii (strain ATCC 43067 / DSM 2661 / JAL-1 / JCM 10045 / NBRC 100440) (Methanococcus jannaschii).